The following is a 612-amino-acid chain: FAD-linked oxidoreductase notD' (612 aa).

Positions Met1 to Gly19 are cleaved as a signal peptide. Residues Asn50, Asn86, and Asn109 are each glycosylated (N-linked (GlcNAc...) asparagine). An FAD-binding PCMH-type domain is found at Gly124 to Ala307. Residues Asn311 and Asn396 are each glycosylated (N-linked (GlcNAc...) asparagine).

Belongs to the oxygen-dependent FAD-linked oxidoreductase family. The cofactor is FAD.

The protein operates within alkaloid biosynthesis. Functionally, FAD-linked oxidoreductase; part of the gene cluster that mediates the biosynthesis of notoamide, a fungal indole alkaloid that belongs to a family of natural products containing a characteristic bicyclo[2.2.2]diazaoctane core. The first step of notoamide biosynthesis involves coupling of L-proline and L-tryptophan by the bimodular NRPS notE', to produce cyclo-L-tryptophan-L-proline called brevianamide F. The reverse prenyltransferase notF' then acts as a deoxybrevianamide E synthase and converts brevianamide F to deoxybrevianamide E via reverse prenylation at C-2 of the indole ring leading to the bicyclo[2.2.2]diazaoctane core. Deoxybrevianamide E is further hydroxylated at C-6 of the indole ring, likely catalyzed by the cytochrome P450 monooxygenase notG', to yield 6-hydroxy-deoxybrevianamide E. 6-hydroxy-deoxybrevianamide E is a specific substrate of the prenyltransferase notC' for normal prenylation at C-7 to produce 6-hydroxy-7-prenyl-deoxybrevianamide, also called notoamide S. As the proposed pivotal branching point in notoamide biosynthesis, notoamide S can be diverted to notoamide E through an oxidative pyran ring closure putatively catalyzed by either notH' cytochrome P450 monooxygenase or the notD' FAD-linked oxidoreductase. This step would be followed by an indole 2,3-epoxidation-initiated pinacol-like rearrangement catalyzed by the notB' FAD-dependent monooxygenase leading to the formation of notoamide C and notoamide D. On the other hand notoamide S is converted to notoamide T by notH' (or notD'), a bifunctional oxidase that also functions as the intramolecular Diels-Alderase responsible for generation of (-)-notoamide T. To generate antipodal (+)-notoaminide T, notH (or notD) in Aspergillus strain MF297-2 is expected to catalyze a Diels-Alder reaction leading to the opposite stereochemistry. The remaining oxidoreductase notD' (or notH') likely catalyzes the oxidative pyran ring formation to yield (-)-stephacidin A. The FAD-dependent monooxygenase notI' is highly similar to notB' and is predicted to catalyze a similar conversion from (-)-stephacidin A to (+)-notoamide B via the 2,3-epoxidation of (-)-stephacidin A followed by a pinacol-type rearrangement. Finally, it remains unclear which enzyme could be responsible for the final hydroxylation steps leading to notoamide A and sclerotiamide. This chain is FAD-linked oxidoreductase notD', found in Aspergillus versicolor.